The following is a 121-amino-acid chain: Putative RNase MJ1216 (121 aa).

Residues arginine 76 and histidine 81 contribute to the active site. Positions 76 to 83 (RDKLIHQY) match the RX(4)HXY motif motif. Tyrosine 83 carries the post-translational modification O-di-AMP-tyrosine.

The protein belongs to the HepT RNase toxin family. Homodimer, probably forms a complex with antitoxin MJ1215 or MJ1217. Modified by antitoxin MJ1215 or MJ1217; probably at least 2 successive AMPylation events occur on Tyr-83.

Functionally, probable toxic component of a putative type VII toxin-antitoxin (TA) system, probably an RNase. Probably neutralized by antitoxin MJ1215 or MJ1217. Neutralization may be due to AMPylation by antitoxin. This chain is Putative RNase MJ1216, found in Methanocaldococcus jannaschii (strain ATCC 43067 / DSM 2661 / JAL-1 / JCM 10045 / NBRC 100440) (Methanococcus jannaschii).